Reading from the N-terminus, the 443-residue chain is Endothelin receptor type B (443 aa).

The N-terminal stretch at 1-26 (MQPLRSLCGRALVALIFACGVAGVQS) is a signal peptide. Residues 27–102 (EERGFPPAGA…GPIEIKDTFK (76 aa)) lie on the Extracellular side of the membrane. A disordered region spans residues 53 to 89 (TFWPRGSNASLPRSSSPPQMPKGGRMAGPPARTLTPP). Polar residues predominate over residues 59–69 (SNASLPRSSSP). Asparagine 60 carries N-linked (GlcNAc...) asparagine glycosylation. The chain crosses the membrane as a helical span at residues 103–127 (YINTVVSCLVFVLGIIGNSTLLRII). At 128–138 (YKNKCMRNGPN) the chain is on the cytoplasmic side. A helical transmembrane segment spans residues 139–164 (ILIASLALGDLLHIIIDIPINVYKLL). Residues 165 to 176 (AEDWPFGVEMCK) are Extracellular-facing. Cysteine 175 and cysteine 256 are disulfide-bonded. Residues 177-198 (LVPFIQKASVGITVLSLCALSI) traverse the membrane as a helical segment. Over 199 to 219 (DRYRAVASWSRIKGIGVPKWT) the chain is Cytoplasmic. Residues 220-244 (AVEIVLIWVVSVVLAVPEALGFDMI) traverse the membrane as a helical segment. Over 245-272 (TTDYKGNRLRICLLHPTQKTAFMQFYKT) the chain is Extracellular. Residues 273-297 (AKDWWLFSFYFCLPLAITAFFYTLM) form a helical membrane-spanning segment. Residues 298 to 325 (TCEMLRKKSGMQIALNDHLKQRREVAKT) lie on the Cytoplasmic side of the membrane. Phosphoserine is present on serine 306. Residues 326–351 (VFCLVLVFALCWLPLHLSRILKLTLY) traverse the membrane as a helical segment. Residues 352-363 (DQNDSNRCELLS) lie on the Extracellular side of the membrane. N-linked (GlcNAc...) asparagine glycosylation is present at asparagine 354. A helical membrane pass occupies residues 364–390 (FLLVLDYIGINMASLNSCINPIALYLV). At 391–443 (SKRFKNCFKSCLCCWCQSFEEKQSLEEKQSCLKFKANDHGYDNFRSSNKYSSS) the chain is on the cytoplasmic side. S-palmitoyl cysteine attachment occurs at residues cysteine 403, cysteine 404, and cysteine 406. Position 420 is a phosphoserine (serine 420). Phosphotyrosine is present on tyrosine 440. Residues serine 441, serine 442, and serine 443 each carry the phosphoserine modification.

This sequence belongs to the G-protein coupled receptor 1 family. Endothelin receptor subfamily. EDNRB sub-subfamily.

It is found in the cell membrane. Non-specific receptor for endothelin 1, 2, and 3. Mediates its action by association with G proteins that activate a phosphatidylinositol-calcium second messenger system. This chain is Endothelin receptor type B (EDNRB), found in Sus scrofa (Pig).